A 328-amino-acid chain; its full sequence is Transcription initiation factor IIE subunit beta (328 aa).

Positions 32 to 105 (QKKTNDTVIT…SSPSKKVRPG (74 aa)) are disordered. Position 52 is a phosphoserine (Ser52). Positions 85-94 (LDDDDDDEDF) are enriched in acidic residues. Phosphoserine is present on residues Ser97 and Ser106. The segment at residues 113-187 (QANQTDISKS…FKYLSTYDVH (75 aa)) is a DNA-binding region (TFIIE beta).

Belongs to the TFIIE beta subunit family. As to quaternary structure, TFIIE is a tetramer of two alpha (TFA1) and two beta (TFA2) subunits.

It localises to the nucleus. Its function is as follows. Recruits TFIIH to the initiation complex and stimulates the RNA polymerase II C-terminal domain kinase and DNA-dependent ATPase activities of TFIIH. Both TFIIH and TFIIE are required for promoter clearance by RNA polymerase. This is Transcription initiation factor IIE subunit beta (TFA2) from Saccharomyces cerevisiae (strain ATCC 204508 / S288c) (Baker's yeast).